Consider the following 487-residue polypeptide: UDP-N-acetylmuramate--L-alanine ligase (487 aa).

An ATP-binding site is contributed by 126–132 (GTHGKTT).

Belongs to the MurCDEF family.

It is found in the cytoplasm. It catalyses the reaction UDP-N-acetyl-alpha-D-muramate + L-alanine + ATP = UDP-N-acetyl-alpha-D-muramoyl-L-alanine + ADP + phosphate + H(+). It participates in cell wall biogenesis; peptidoglycan biosynthesis. In terms of biological role, cell wall formation. This Psychromonas ingrahamii (strain DSM 17664 / CCUG 51855 / 37) protein is UDP-N-acetylmuramate--L-alanine ligase.